A 1551-amino-acid chain; its full sequence is Pentafunctional AROM polypeptide 1 (1551 aa).

Residues 1-379 (MSIEKVSILG…YESKAHQIFK (379 aa)) are 3-dehydroquinate synthase. Residues 42–44 (DTN), 80–83 (ENHK), 111–113 (GGV), and Asp-116 each bind NAD(+). Arg-127 provides a ligand contact to 7-phospho-2-dehydro-3-deoxy-D-arabino-heptonate. Residue 136–137 (TT) participates in NAD(+) binding. 2 residues coordinate 7-phospho-2-dehydro-3-deoxy-D-arabino-heptonate: Asp-143 and Lys-149. Position 158 (Lys-158) interacts with NAD(+). A 7-phospho-2-dehydro-3-deoxy-D-arabino-heptonate-binding site is contributed by Asn-159. NAD(+) is bound by residues 176–179 (FLQT) and Asn-187. Zn(2+) is bound at residue Glu-191. Residues 191–194 (EVVK) and Lys-243 each bind 7-phospho-2-dehydro-3-deoxy-D-arabino-heptonate. The active-site Proton acceptor; for 3-dehydroquinate synthase activity is the Glu-253. Residues 257-261 (RNLLN) and His-264 each bind 7-phospho-2-dehydro-3-deoxy-D-arabino-heptonate. His-264 lines the Zn(2+) pocket. His-268 functions as the Proton acceptor; for 3-dehydroquinate synthase activity in the catalytic mechanism. 7-phospho-2-dehydro-3-deoxy-D-arabino-heptonate-binding residues include His-280 and Lys-351. His-280 is a binding site for Zn(2+). An EPSP synthase region spans residues 392–835 (VHPFANRHPE…WDVLHSKFNA (444 aa)). Residues 854–1044 (DRSIVIIGMR…LPATRSTFVT (191 aa)) are shikimate kinase. Residue 861-868 (GMRAAGKT) coordinates ATP. The 3-dehydroquinase stretch occupies residues 1045–1258 (LTYPDLRKVP…IGVGQLSLKE (214 aa)). His-1162 functions as the Proton acceptor; for 3-dehydroquinate dehydratase activity in the catalytic mechanism. Residue Lys-1191 is the Schiff-base intermediate with substrate; for 3-dehydroquinate dehydratase activity of the active site. Positions 1271–1551 (EKEFWVVGSP…KVIHSAVLNE (281 aa)) are shikimate dehydrogenase.

The protein in the N-terminal section; belongs to the sugar phosphate cyclases superfamily. Dehydroquinate synthase family. In the 2nd section; belongs to the EPSP synthase family. It in the 3rd section; belongs to the shikimate kinase family. This sequence in the 4th section; belongs to the type-I 3-dehydroquinase family. The protein in the C-terminal section; belongs to the shikimate dehydrogenase family. Homodimer. Zn(2+) serves as cofactor.

The protein localises to the cytoplasm. The enzyme catalyses 7-phospho-2-dehydro-3-deoxy-D-arabino-heptonate = 3-dehydroquinate + phosphate. It catalyses the reaction 3-dehydroquinate = 3-dehydroshikimate + H2O. It carries out the reaction shikimate + NADP(+) = 3-dehydroshikimate + NADPH + H(+). The catalysed reaction is shikimate + ATP = 3-phosphoshikimate + ADP + H(+). The enzyme catalyses 3-phosphoshikimate + phosphoenolpyruvate = 5-O-(1-carboxyvinyl)-3-phosphoshikimate + phosphate. It functions in the pathway metabolic intermediate biosynthesis; chorismate biosynthesis; chorismate from D-erythrose 4-phosphate and phosphoenolpyruvate: step 2/7. Its pathway is metabolic intermediate biosynthesis; chorismate biosynthesis; chorismate from D-erythrose 4-phosphate and phosphoenolpyruvate: step 3/7. It participates in metabolic intermediate biosynthesis; chorismate biosynthesis; chorismate from D-erythrose 4-phosphate and phosphoenolpyruvate: step 4/7. The protein operates within metabolic intermediate biosynthesis; chorismate biosynthesis; chorismate from D-erythrose 4-phosphate and phosphoenolpyruvate: step 5/7. It functions in the pathway metabolic intermediate biosynthesis; chorismate biosynthesis; chorismate from D-erythrose 4-phosphate and phosphoenolpyruvate: step 6/7. Its function is as follows. The AROM polypeptide catalyzes 5 consecutive enzymatic reactions in prechorismate polyaromatic amino acid biosynthesis. The chain is Pentafunctional AROM polypeptide 1 from Lodderomyces elongisporus (strain ATCC 11503 / CBS 2605 / JCM 1781 / NBRC 1676 / NRRL YB-4239) (Yeast).